Here is a 242-residue protein sequence, read N- to C-terminus: 6-phosphogluconolactonase (242 aa).

It belongs to the glucosamine/galactosamine-6-phosphate isomerase family. 6-phosphogluconolactonase subfamily.

The catalysed reaction is 6-phospho-D-glucono-1,5-lactone + H2O = 6-phospho-D-gluconate + H(+). Its pathway is carbohydrate degradation; pentose phosphate pathway; D-ribulose 5-phosphate from D-glucose 6-phosphate (oxidative stage): step 2/3. In terms of biological role, hydrolysis of 6-phosphogluconolactone to 6-phosphogluconate. This Pseudomonas putida (Arthrobacter siderocapsulatus) protein is 6-phosphogluconolactonase (pgl).